Here is a 68-residue protein sequence, read N- to C-terminus: Large ribosomal subunit protein uL29 (68 aa).

The protein belongs to the universal ribosomal protein uL29 family.

This Streptococcus suis (strain 98HAH33) protein is Large ribosomal subunit protein uL29.